A 195-amino-acid polypeptide reads, in one-letter code: Imidazoleglycerol-phosphate dehydratase (195 aa).

Belongs to the imidazoleglycerol-phosphate dehydratase family.

It is found in the cytoplasm. The enzyme catalyses D-erythro-1-(imidazol-4-yl)glycerol 3-phosphate = 3-(imidazol-4-yl)-2-oxopropyl phosphate + H2O. It participates in amino-acid biosynthesis; L-histidine biosynthesis; L-histidine from 5-phospho-alpha-D-ribose 1-diphosphate: step 6/9. The polypeptide is Imidazoleglycerol-phosphate dehydratase (Paraburkholderia phymatum (strain DSM 17167 / CIP 108236 / LMG 21445 / STM815) (Burkholderia phymatum)).